Consider the following 370-residue polypeptide: Protein FAM110B (370 aa).

Disordered regions lie at residues S127–A151 and K237–L256. Residues S238 and S301 each carry the phosphoserine modification. The disordered stretch occupies residues D317 to R337. The span at S326–N335 shows a compositional bias: basic and acidic residues.

The protein belongs to the FAM110 family. In terms of tissue distribution, detected in thyroid, spleen and testis, and at lower levels in stomach, spinal cord, lymph node, trachea, adrenal gland, prostate, ovary and intestine.

It localises to the cytoplasm. Its subcellular location is the cytoskeleton. The protein localises to the microtubule organizing center. The protein resides in the centrosome. Functionally, may be involved in tumor progression. This is Protein FAM110B (FAM110B) from Homo sapiens (Human).